The primary structure comprises 209 residues: RNA chaperone ProQ (209 aa).

Residues 105 to 148 are disordered; sequence ESQDKAKAKRAALAPKPAAKKAPKKVAVPQRAKTERPAKPAPKA.

Belongs to the ProQ family.

It is found in the cytoplasm. Functionally, RNA chaperone with significant RNA binding, RNA strand exchange and RNA duplexing activities. The protein is RNA chaperone ProQ of Shewanella baltica (strain OS223).